A 119-amino-acid chain; its full sequence is DNA-binding protein inhibitor ID-3 (119 aa).

The region spanning 28–80 (RGKGPAAEEPLSLLDDMNHCYSRLRELVPGVPRGTQLSQVEILQRVIDYILDL) is the bHLH domain.

Homodimer, and heterodimer with other HLH proteins. Interacts with COPS5 and COPS7A. Interacts with IFI204. Interacts with GATA4 and NKX2-5. Interacts with ANKRD2; both proteins cooperate in myoblast differentiation. Interacts with CLOCK and BMAL1. In terms of tissue distribution, expressed abundantly in lung, kidney and adrenal gland, but not in adult brain.

It localises to the nucleus. Its function is as follows. Transcriptional regulator (lacking a basic DNA binding domain) which negatively regulates the basic helix-loop-helix (bHLH) transcription factors by forming heterodimers and inhibiting their DNA binding and transcriptional activity. Implicated in regulating a variety of cellular processes, including cellular growth, senescence, differentiation, apoptosis, angiogenesis, and neoplastic transformation. Involved in myogenesis by inhibiting skeletal muscle and cardiac myocyte differentiation and promoting muscle precursor cells proliferation. Inhibits the binding of E2A-containing protein complexes to muscle creatine kinase E-box enhancer. Regulates the circadian clock by repressing the transcriptional activator activity of the CLOCK-BMAL1 heterodimer. This is DNA-binding protein inhibitor ID-3 (ID3) from Homo sapiens (Human).